Consider the following 478-residue polypeptide: F-box protein YDR306C (478 aa).

A compositionally biased stretch (basic residues) spans 1-14 (MANKSRPKKIKAPY). 2 disordered regions span residues 1 to 32 (MANK…DNKA) and 67 to 101 (RLSN…VIES). A compositionally biased stretch (low complexity) spans 80-90 (QSPSSSSTSSS). The span at 91–101 (KGEKNGKVIES) shows a compositional bias: basic and acidic residues. In terms of domain architecture, F-box spans 112-173 (KMVLPWEIQH…CLPKLYYAPA (62 aa)).

Interacts with SKP1. Component of the probable SCF(YDR306C) complex containing CDC53, SKP1, RBX1 and YDR306C. Autoubiquitinated by the E3 ubiquitin ligase complex in conjunction with the E2 enzyme CDC34.

It functions in the pathway protein modification; protein ubiquitination. In terms of biological role, substrate recognition component of a SCF (SKP1-CUL1-F-box protein) E3 ubiquitin-protein ligase complex which mediates the ubiquitination and subsequent proteasomal degradation of target proteins. Probably recognizes and binds to phosphorylated target proteins. This Saccharomyces cerevisiae (strain ATCC 204508 / S288c) (Baker's yeast) protein is F-box protein YDR306C.